Here is a 153-residue protein sequence, read N- to C-terminus: Aspartate carbamoyltransferase regulatory chain (153 aa).

Residues C109, C114, C138, and C141 each contribute to the Zn(2+) site.

The protein belongs to the PyrI family. Contains catalytic and regulatory chains. It depends on Zn(2+) as a cofactor.

Involved in allosteric regulation of aspartate carbamoyltransferase. This is Aspartate carbamoyltransferase regulatory chain from Enterobacter sp. (strain 638).